We begin with the raw amino-acid sequence, 212 residues long: Ras-related protein Rab-21 (212 aa).

Residues glycine 14–threonine 21, aspartate 62–glutamine 66, and asparagine 120–aspartate 123 each bind GTP. The interval threonine 181 to asparagine 212 is disordered. Residues aspartate 201–asparagine 212 show a composition bias toward polar residues. 2 S-geranylgeranyl cysteine lipidation sites follow: cysteine 209 and cysteine 210.

This sequence belongs to the small GTPase superfamily. Rab family. In terms of assembly, interacts with LIM domain proteins limF and ChLim.

The protein localises to the cell membrane. Functionally, involved in the regulation of phagocytosis. The polypeptide is Ras-related protein Rab-21 (rab21) (Dictyostelium discoideum (Social amoeba)).